A 238-amino-acid chain; its full sequence is Isoprene-epoxide--glutathione S-transferase (238 aa).

One can recognise a GST N-terminal domain in the interval 7–82; it reads YVPAWGIPDI…YLKNKFGDKL (76 aa). In terms of domain architecture, GST C-terminal spans 118 to 238; sequence DAGWETYIPF…LERIRKQYDI (121 aa).

The protein belongs to the GST superfamily. Homodimer.

It catalyses the reaction 2-glutathionyl-2-methylbut-3-en-1-ol = (3R)-3,4-epoxy-3-methylbut-1-ene + glutathione. Its activity is regulated as follows. Activity is inhibited by 1,2-epoxyhexane. In terms of biological role, involved in isoprene degradation. Catalyzes the glutathione-dependent ring opening of various epoxides. The highest conversion rate is observed with the physiological substrate, 3,4-epoxy-3-methyl-1-butene, which is the primary oxidation product of isoprene. It can also use other epoxides, including epoxyethane, epoxypropane, epithiopropane, epichlorohydrin, epifluorohydrin, epibromohydrin, 1,2-epoxybutane, 1,2-epoxyhexane, cis-2,3-epoxybutane, cis-1,2-dichloroepoxyethane and trans-1,2-dichloroepoxyethane. In Rhodococcus sp. (strain AD45), this protein is Isoprene-epoxide--glutathione S-transferase.